Reading from the N-terminus, the 397-residue chain is uncharacterized protein (397 aa).

The next 12 helical transmembrane spans lie at 5–25, 43–63, 69–89, 92–112, 131–151, 157–177, 202–222, 233–253, 269–289, 293–313, 333–353, and 360–380; these read LKILVIGMFINVTGASFLWPL, LVLMLNSGASVAGNLCGGFLF, FKSIMLGIAITLASLMGLVFF, WPAYIVLLTIVGFGSGVVFPA, AIYVAQNAGVAVGSALGGVVA, YVFLANAVLYLIFFFIVYFGF, FAALIILSGGYVLGWLAYSQW, IGISLSLYSVLWTVNGILIVL, LKAQMVIGFIIFIVSFSMLLT, FPMFLAAMVILTIGEMLVWPA, FVNSAATGGRMIGPLFGGVLV, and ALVLSLLVLLLISIATTLLYD.

It belongs to the major facilitator superfamily.

The protein localises to the cell membrane. This is an uncharacterized protein from Bacillus subtilis (strain 168).